The sequence spans 217 residues: MAETTTKDDKPLFGRPWIFIRGVPSMKFLPPEGPAEIAFAGRSNVGKSSLINALVGHKGLARTSNTPGRTQELNYFVPDGYSGEADDLPPMALVDMPGYGYAQAPKEQVDAWTKLVFDYLRGRSTLKRVYVLIDARHGIKKNDEEVLALLDKAAVSYQIVLTKTDKIKAAGVPRLIAETLDKIKKRPAAYPEVLSTSSEKGAGIEDLRITIEQAVAR.

The region spanning 33–217 (GPAEIAFAGR…RITIEQAVAR (185 aa)) is the EngB-type G domain. Residues 41–48 (GRSNVGKS), 68–72 (GRTQE), 95–98 (DMPG), 162–165 (TKTD), and 196–198 (TSS) contribute to the GTP site. Residues Ser48 and Thr70 each coordinate Mg(2+).

The protein belongs to the TRAFAC class TrmE-Era-EngA-EngB-Septin-like GTPase superfamily. EngB GTPase family. Mg(2+) serves as cofactor.

Its function is as follows. Necessary for normal cell division and for the maintenance of normal septation. This is Probable GTP-binding protein EngB from Sinorhizobium fredii (strain NBRC 101917 / NGR234).